A 204-amino-acid chain; its full sequence is dTTP/UTP pyrophosphatase (204 aa).

Catalysis depends on Asp68, which acts as the Proton acceptor.

Belongs to the Maf family. YhdE subfamily. Requires a divalent metal cation as cofactor.

The protein localises to the cytoplasm. The catalysed reaction is dTTP + H2O = dTMP + diphosphate + H(+). It carries out the reaction UTP + H2O = UMP + diphosphate + H(+). In terms of biological role, nucleoside triphosphate pyrophosphatase that hydrolyzes dTTP and UTP. May have a dual role in cell division arrest and in preventing the incorporation of modified nucleotides into cellular nucleic acids. This is dTTP/UTP pyrophosphatase from Thermotoga petrophila (strain ATCC BAA-488 / DSM 13995 / JCM 10881 / RKU-1).